The following is a 414-amino-acid chain: 2,3-diketo-5-methylthiopentyl-1-phosphate enolase (414 aa).

Lysine 99 (proton acceptor) is an active-site residue. Residues lysine 148, 174 to 177, histidine 265, glycine 338, and 360 to 361 each bind substrate; these read KDDE and GG. Lysine 174, aspartate 176, and glutamate 177 together coordinate Mg(2+). At lysine 174 the chain carries N6-carboxylysine.

It belongs to the RuBisCO large chain family. Type IV subfamily. Homodimer. Mg(2+) serves as cofactor.

The catalysed reaction is 5-methylsulfanyl-2,3-dioxopentyl phosphate = 2-hydroxy-5-methylsulfanyl-3-oxopent-1-enyl phosphate. It functions in the pathway amino-acid biosynthesis; L-methionine biosynthesis via salvage pathway; L-methionine from S-methyl-5-thio-alpha-D-ribose 1-phosphate: step 3/6. Catalyzes the enolization of 2,3-diketo-5-methylthiopentyl-1-phosphate (DK-MTP-1-P) into 2-hydroxy-3-keto-5-methylthiopentenyl-1-phosphate (HK-MTPenyl-1-P). This chain is 2,3-diketo-5-methylthiopentyl-1-phosphate enolase, found in Bacillus cereus (strain Q1).